We begin with the raw amino-acid sequence, 506 residues long: Histidine ammonia-lyase (506 aa).

A cross-link (5-imidazolinone (Ala-Gly)) is located at residues 143-145 (ASG). The residue at position 144 (S144) is a 2,3-didehydroalanine (Ser).

This sequence belongs to the PAL/histidase family. Contains an active site 4-methylidene-imidazol-5-one (MIO), which is formed autocatalytically by cyclization and dehydration of residues Ala-Ser-Gly.

The protein resides in the cytoplasm. The catalysed reaction is L-histidine = trans-urocanate + NH4(+). It participates in amino-acid degradation; L-histidine degradation into L-glutamate; N-formimidoyl-L-glutamate from L-histidine: step 1/3. The polypeptide is Histidine ammonia-lyase (Enterobacter sp. (strain 638)).